Consider the following 145-residue polypeptide: Putative pre-16S rRNA nuclease (145 aa).

Belongs to the YqgF nuclease family.

The protein localises to the cytoplasm. Its function is as follows. Could be a nuclease involved in processing of the 5'-end of pre-16S rRNA. The chain is Putative pre-16S rRNA nuclease from Opitutus terrae (strain DSM 11246 / JCM 15787 / PB90-1).